Here is a 140-residue protein sequence, read N- to C-terminus: Large ribosomal subunit protein uL13 (140 aa).

The protein belongs to the universal ribosomal protein uL13 family. As to quaternary structure, part of the 50S ribosomal subunit.

This protein is one of the early assembly proteins of the 50S ribosomal subunit, although it is not seen to bind rRNA by itself. It is important during the early stages of 50S assembly. This Methanosarcina mazei (strain ATCC BAA-159 / DSM 3647 / Goe1 / Go1 / JCM 11833 / OCM 88) (Methanosarcina frisia) protein is Large ribosomal subunit protein uL13.